Reading from the N-terminus, the 650-residue chain is Protein KINESIN LIGHT CHAIN-RELATED 3 (650 aa).

Positions 104 to 141 are disordered; sequence EKQTGKKNVTKSNVGVGGMRKKKVGGTKLQNGNEEPSS. The segment covering 131-141 has biased composition (polar residues); the sequence is KLQNGNEEPSS. TPR repeat units follow at residues 192–225, 235–268, 277–310, 319–353, 359–392, 401–434, 444–477, 485–518, 527–560, and 569–602; these read IMCL…PVVE, FAGL…QKKV, GETC…HRES, AADR…AANG, AFVD…LKTA, GSVY…YESH, ASGL…YADS, AGIE…LRAT, GIAL…LEQE, and LGLY…REEK.

This sequence belongs to the kinesin light chain family.

The sequence is that of Protein KINESIN LIGHT CHAIN-RELATED 3 from Arabidopsis thaliana (Mouse-ear cress).